We begin with the raw amino-acid sequence, 204 residues long: Urease accessory protein UreG (204 aa).

Gly-12–Thr-19 lines the GTP pocket.

The protein belongs to the SIMIBI class G3E GTPase family. UreG subfamily. In terms of assembly, homodimer. UreD, UreF and UreG form a complex that acts as a GTP-hydrolysis-dependent molecular chaperone, activating the urease apoprotein by helping to assemble the nickel containing metallocenter of UreC. The UreE protein probably delivers the nickel.

Its subcellular location is the cytoplasm. Its function is as follows. Facilitates the functional incorporation of the urease nickel metallocenter. This process requires GTP hydrolysis, probably effectuated by UreG. In Azotobacter vinelandii (strain DJ / ATCC BAA-1303), this protein is Urease accessory protein UreG.